The chain runs to 218 residues: Small ribosomal subunit protein uS3 (218 aa).

At Met1 the chain carries N-acetylmethionine. Residues 23–95 (LNELFTREFN…TVVLFAEKIL (73 aa)) form the KH type-2 domain.

This sequence belongs to the universal ribosomal protein uS3 family.

This is Small ribosomal subunit protein uS3 (rps3) from Dictyostelium discoideum (Social amoeba).